The following is a 262-amino-acid chain: 5'-nucleotidase SurE (262 aa).

The a divalent metal cation site is built by Asp8, Asp9, Ser41, and Asn97.

The protein belongs to the SurE nucleotidase family. The cofactor is a divalent metal cation.

Its subcellular location is the cytoplasm. It catalyses the reaction a ribonucleoside 5'-phosphate + H2O = a ribonucleoside + phosphate. In terms of biological role, nucleotidase that shows phosphatase activity on nucleoside 5'-monophosphates. This is 5'-nucleotidase SurE from Methanococcus maripaludis (strain DSM 14266 / JCM 13030 / NBRC 101832 / S2 / LL).